Reading from the N-terminus, the 489-residue chain is Envelope glycoprotein C homolog (489 aa).

An N-terminal signal peptide occupies residues 1 to 32 (MVSNMRVLRVLRLTGWVGIFLVLSLQQTSCAG). Over 33–455 (LPHNVDTHHI…YYDATPSARG (423 aa)) the chain is Virion surface. Residues 59-94 (EVPNSPTTELSTTVATKTAVPTTESTSSSEAHRNSS) are disordered. Residues 60–69 (VPNSPTTELS) are compositionally biased toward polar residues. Over residues 70-81 (TTVATKTAVPTT) the composition is skewed to low complexity. N-linked (GlcNAc...) asparagine; by host glycosylation is found at Asn-92, Asn-112, Asn-204, Asn-346, and Asn-392. In terms of domain architecture, Ig-like spans 250–348 (PASVDVLAPP…GDMISTSNAT (99 aa)). The chain crosses the membrane as a helical span at residues 456-486 (MPMIVTITAVLGLALFLGIGIIITALCFYLP). Topologically, residues 487–489 (GRN) are cytoplasmic.

Belongs to the herpesviridae glycoprotein C family.

Its subcellular location is the virion membrane. The chain is Envelope glycoprotein C homolog (gC) from Gallus gallus (Chicken).